A 430-amino-acid chain; its full sequence is Histidine--tRNA ligase (430 aa).

This sequence belongs to the class-II aminoacyl-tRNA synthetase family. In terms of assembly, homodimer.

Its subcellular location is the cytoplasm. It carries out the reaction tRNA(His) + L-histidine + ATP = L-histidyl-tRNA(His) + AMP + diphosphate + H(+). The sequence is that of Histidine--tRNA ligase from Parasynechococcus marenigrum (strain WH8102).